A 561-amino-acid chain; its full sequence is Septation ring formation regulator EzrA (561 aa).

At 1-3 the chain is on the extracellular side; it reads MWI. Residues 4–22 form a helical membrane-spanning segment; it reads VVFSLLVLTVTFFVYGALR. The Cytoplasmic segment spans residues 23 to 561; it reads RKAFYKRVDK…VLEKVQHLAG (539 aa). Coiled coils occupy residues 98–130, 166–214, and 251–465; these read RFQK…IQVL, AKVF…HLLK, and FAID…KLSD.

The protein belongs to the EzrA family.

The protein localises to the cell membrane. Negative regulator of FtsZ ring formation; modulates the frequency and position of FtsZ ring formation. Inhibits FtsZ ring formation at polar sites. Interacts either with FtsZ or with one of its binding partners to promote depolymerization. This chain is Septation ring formation regulator EzrA, found in Halalkalibacterium halodurans (strain ATCC BAA-125 / DSM 18197 / FERM 7344 / JCM 9153 / C-125) (Bacillus halodurans).